Here is a 177-residue protein sequence, read N- to C-terminus: CASP-like protein 2U1 (177 aa).

A helical membrane pass occupies residues 1–21 (MVLRIVASLLSIAALVLMAKD). Topologically, residues 22–48 (KQVVYLNLAGEELTLEAKHSYVEAFVY) are cytoplasmic. Residues 49 to 69 (LVYSNGLVAIYCFLLVFALVF) traverse the membrane as a helical segment. Residues 70 to 80 (RLIDKAGCGKS) are Extracellular-facing. Residues 81-101 (AAWIIFLLDQGLAYVLLAAAA) traverse the membrane as a helical segment. Residues 102–131 (ASTEVAYVAKRGNNKVGWSEVCSTFGHFCN) are Cytoplasmic-facing. A helical membrane pass occupies residues 132 to 152 (LVGVSIVITFISVLAMATLSV). Residues 153 to 177 (MSARRLFKTYGPERKQISSNDAPAI) are Extracellular-facing.

It belongs to the Casparian strip membrane proteins (CASP) family. In terms of assembly, homodimer and heterodimers.

The protein resides in the cell membrane. This is CASP-like protein 2U1 from Osmunda lancea (Fern).